Here is a 321-residue protein sequence, read N- to C-terminus: Fimbria adhesin protein (321 aa).

Positions 1 to 18 (MKKLTLFIGLMALGTTSA) are cleaved as a signal peptide.

It belongs to the fimbrial protein family.

It is found in the fimbrium. The protein is Fimbria adhesin protein (mrkD) of Klebsiella pneumoniae.